The primary structure comprises 379 residues: tRNA(Met) cytidine acetate ligase (379 aa).

Residues 7-20 (ITEYNPFHNGHQYH), Gly100, Asn153, and Arg178 each bind ATP.

It belongs to the TmcAL family.

It localises to the cytoplasm. The enzyme catalyses cytidine(34) in elongator tRNA(Met) + acetate + ATP = N(4)-acetylcytidine(34) in elongator tRNA(Met) + AMP + diphosphate. In terms of biological role, catalyzes the formation of N(4)-acetylcytidine (ac(4)C) at the wobble position of elongator tRNA(Met), using acetate and ATP as substrates. First activates an acetate ion to form acetyladenylate (Ac-AMP) and then transfers the acetyl group to tRNA to form ac(4)C34. The protein is tRNA(Met) cytidine acetate ligase of Staphylococcus aureus (strain MRSA252).